We begin with the raw amino-acid sequence, 284 residues long: 3-methyl-2-oxobutanoate hydroxymethyltransferase 2 (284 aa).

Mg(2+)-binding residues include Asp49 and Asp88. 3-methyl-2-oxobutanoate contacts are provided by residues 49-50 (DS), Asp88, and Lys118. Glu120 contacts Mg(2+). Glu187 functions as the Proton acceptor in the catalytic mechanism.

This sequence belongs to the PanB family. Homodecamer; pentamer of dimers. Requires Mg(2+) as cofactor.

It is found in the cytoplasm. The enzyme catalyses 3-methyl-2-oxobutanoate + (6R)-5,10-methylene-5,6,7,8-tetrahydrofolate + H2O = 2-dehydropantoate + (6S)-5,6,7,8-tetrahydrofolate. It participates in cofactor biosynthesis; (R)-pantothenate biosynthesis; (R)-pantoate from 3-methyl-2-oxobutanoate: step 1/2. Catalyzes the reversible reaction in which hydroxymethyl group from 5,10-methylenetetrahydrofolate is transferred onto alpha-ketoisovalerate to form ketopantoate. The sequence is that of 3-methyl-2-oxobutanoate hydroxymethyltransferase 2 from Burkholderia ambifaria (strain ATCC BAA-244 / DSM 16087 / CCUG 44356 / LMG 19182 / AMMD) (Burkholderia cepacia (strain AMMD)).